Reading from the N-terminus, the 122-residue chain is Large ribosomal subunit protein bL12 (122 aa).

The protein belongs to the bacterial ribosomal protein bL12 family. In terms of assembly, homodimer. Part of the ribosomal stalk of the 50S ribosomal subunit. Forms a multimeric L10(L12)X complex, where L10 forms an elongated spine to which 2 to 4 L12 dimers bind in a sequential fashion. Binds GTP-bound translation factors.

In terms of biological role, forms part of the ribosomal stalk which helps the ribosome interact with GTP-bound translation factors. Is thus essential for accurate translation. The polypeptide is Large ribosomal subunit protein bL12 (Vibrio campbellii (strain ATCC BAA-1116)).